We begin with the raw amino-acid sequence, 193 residues long: dCTP deaminase (193 aa).

DCTP contacts are provided by residues 110-115 (RSSLAR), Asp-128, 136-138 (VLE), Tyr-171, Lys-178, and Gln-182. Catalysis depends on Glu-138, which acts as the Proton donor/acceptor. Residues 169 to 193 (RPYNRREDAKYRNQQGAVASRIDKD) are disordered.

It belongs to the dCTP deaminase family. As to quaternary structure, homotrimer.

The catalysed reaction is dCTP + H2O + H(+) = dUTP + NH4(+). It functions in the pathway pyrimidine metabolism; dUMP biosynthesis; dUMP from dCTP (dUTP route): step 1/2. In terms of biological role, catalyzes the deamination of dCTP to dUTP. The polypeptide is dCTP deaminase (Sodalis glossinidius (strain morsitans)).